The chain runs to 123 residues: TYMS opposite strand protein (123 aa).

The tract at residues 57 to 111 (MRPLPRRIEVRTKRGPQRPAAPERSPQPRLPPSRHPSRRGPRRHLSGCSAPACRI) is disordered. The span at 91 to 101 (HPSRRGPRRHL) shows a compositional bias: basic residues.

This chain is TYMS opposite strand protein (TYMSOS), found in Homo sapiens (Human).